Reading from the N-terminus, the 199-residue chain is Charged multivesicular body protein 1b (199 aa).

Coiled-coil stretches lie at residues 10–30 and 178–199; these read NLKFAAKELQRNSKKCDKEEK and TSVASAEQDELSQRLAKLRDQV. The disordered stretch occupies residues 167–199; the sequence is ELPQGQTGSVGTSVASAEQDELSQRLAKLRDQV. Residues 170 to 182 are compositionally biased toward polar residues; the sequence is QGQTGSVGTSVAS. An MIT-interacting motif motif is present at residues 186-196; sequence DELSQRLAKLR.

Belongs to the SNF7 family. Probable peripherally associated component of the endosomal sorting required for transport complex III (ESCRT-III).

The protein localises to the cytoplasm. It is found in the cytosol. It localises to the endosome. The protein resides in the late endosome membrane. Its function is as follows. Probable peripherally associated component of the endosomal sorting required for transport complex III (ESCRT-III) which is involved in multivesicular bodies (MVBs) formation and sorting of endosomal cargo proteins into MVBs. MVBs contain intraluminal vesicles (ILVs) that are generated by invagination and scission from the limiting membrane of the endosome and mostly are delivered to lysosomes enabling degradation of membrane proteins, such as stimulated growth factor receptors, lysosomal enzymes and lipids. The sequence is that of Charged multivesicular body protein 1b (chmp1b) from Danio rerio (Zebrafish).